A 378-amino-acid polypeptide reads, in one-letter code: Beta-1,3-galactosyltransferase 4 (378 aa).

At Met1–Arg8 the chain is on the cytoplasmic side. A helical; Signal-anchor for type II membrane protein transmembrane segment spans residues Leu9–Val19. Topologically, residues Trp20 to Ser378 are lumenal. Residue Asn149 is glycosylated (N-linked (GlcNAc...) asparagine).

This sequence belongs to the glycosyltransferase 31 family. As to expression, highly expressed in heart, skeletal muscle and pancreas and, to a lesser extent, in brain, placenta, kidney, liver and lung.

It localises to the golgi apparatus membrane. It carries out the reaction a ganglioside GM2 (d18:1(4E)) + UDP-alpha-D-galactose = a ganglioside GM1 (d18:1(4E)) + UDP + H(+). It catalyses the reaction a ganglioside GM2 + UDP-alpha-D-galactose = a ganglioside GM1 + UDP + H(+). The enzyme catalyses a ganglioside GD2 (d18:1(4E)) + UDP-alpha-D-galactose = a ganglioside GD1b (d18:1(4E)) + UDP + H(+). The catalysed reaction is a ganglioside GA2 (d18:1(4E)) + UDP-alpha-D-galactose = a ganglioside GA1 (d18:1(4E)) + UDP + H(+). It functions in the pathway protein modification; protein glycosylation. Functionally, involved in GM1/GD1B/GA1 ganglioside biosynthesis. This chain is Beta-1,3-galactosyltransferase 4, found in Homo sapiens (Human).